The sequence spans 263 residues: Probable septum site-determining protein MinC (263 aa).

The interval 107–159 (LPPSGARERPLDIKDSAPRKPAEEPSPSAGEARPEPAKAEEKPADPVSRPTKV) is disordered. Basic and acidic residues-rich tracts occupy residues 112-129 (ARER…KPAE) and 138-150 (ARPE…EKPA).

Belongs to the MinC family. In terms of assembly, interacts with MinD and FtsZ.

Functionally, cell division inhibitor that blocks the formation of polar Z ring septums. Rapidly oscillates between the poles of the cell to destabilize FtsZ filaments that have formed before they mature into polar Z rings. Prevents FtsZ polymerization. The polypeptide is Probable septum site-determining protein MinC (Pseudomonas aeruginosa (strain UCBPP-PA14)).